Consider the following 558-residue polypeptide: Phosphatidylserine lipase ABHD16A (558 aa).

2 helical membrane-spanning segments follow: residues 60-80 (ILALASVFWSISYYSSPFAFF) and 93-113 (VVPFSHYAGTLLLLLAGVACL). Topologically, residues 114-558 (RGIGRWTNPQ…AQNFQMPWHL (445 aa)) are cytoplasmic. In terms of domain architecture, AB hydrolase-1 spans 281–407 (LVICCEGNAG…LVTRTVRQHL (127 aa)). Residues Ser355, Asp430, and His507 each act as charge relay system in the active site.

It belongs to the AB hydrolase superfamily. ABHD16 family.

The protein resides in the membrane. The enzyme catalyses 1-heptadecanoyl-2-(5Z,8Z,11Z,14Z-eicosatetraenoyl)-sn-glycero-3-phosphoserine + H2O = 1-heptadecanoyl-sn-glycero-3-phosphoserine + (5Z,8Z,11Z,14Z)-eicosatetraenoate + H(+). It carries out the reaction 1-hexadecanoyl-2-(9Z-octadecenoyl)-sn-glycero-3-phospho-L-serine + H2O = 1-hexadecanoyl-sn-glycero-3-phospho-L-serine + (9Z)-octadecenoate + H(+). It catalyses the reaction 1-octadecanoyl-2-(9Z,12Z-octadecadienoyl)-sn-glycero-3-phosphoserine + H2O = 1-octadecanoyl-sn-glycero-3-phosphoserine + (9Z,12Z)-octadecadienoate + H(+). The catalysed reaction is 1-heptadecanoyl-2-(5Z,8Z,11Z,14Z-eicosatetraenoyl)-sn-glycero-3-phosphocholine + H2O = 1-heptadecanoyl-sn-glycero-3-phosphocholine + (5Z,8Z,11Z,14Z)-eicosatetraenoate + H(+). The enzyme catalyses 1-hexadecanoyl-2-(9Z-octadecenoyl)-sn-glycero-3-phosphoglycerol + H2O = 1-hexadecanoyl-sn-glycero-3-phosphoglycerol + (9Z)-octadecenoate + H(+). It carries out the reaction 1-hexadecanoyl-2-(9Z-octadecenoyl)-sn-glycero-3-phospho-(1D-myo-inositol) + H2O = 1-hexadecanoyl-sn-glycero-3-phospho-(1D-myo-inositol) + (9Z)-octadecenoate + H(+). It catalyses the reaction 1-heptadecanoyl-2-(5Z,8Z,11Z,14Z-eicosatetraenoyl)-sn-glycero-3-phosphoethanolamine + H2O = 1-heptadecanoyl-sn-glycero-3-phosphoethanolamine + (5Z,8Z,11Z,14Z)-eicosatetraenoate + H(+). The catalysed reaction is 1-hexadecanoyl-2-(9Z-octadecenoyl)-sn-glycero-3-phospho-(1'-sn-glycerol) + H2O = 1-hexadecanoyl-sn-glycero-3-phospho-(1'-sn-glycerol) + (9Z)-octadecenoate + H(+). The enzyme catalyses Hydrolyzes glycerol monoesters of long-chain fatty acids.. It carries out the reaction 1-tetradecanoylglycerol + H2O = tetradecanoate + glycerol + H(+). It catalyses the reaction 2-hexadecanoylglycerol + H2O = glycerol + hexadecanoate + H(+). The catalysed reaction is 1-(9Z-octadecenoyl)-glycerol + H2O = glycerol + (9Z)-octadecenoate + H(+). The enzyme catalyses 2-(9Z-octadecenoyl)-glycerol + H2O = glycerol + (9Z)-octadecenoate + H(+). It carries out the reaction 2-(9Z,12Z-octadecadienoyl)-glycerol + H2O = (9Z,12Z)-octadecadienoate + glycerol + H(+). It catalyses the reaction 1-(5Z,8Z,11Z,14Z-eicosatetraenoyl)-glycerol + H2O = glycerol + (5Z,8Z,11Z,14Z)-eicosatetraenoate + H(+). The catalysed reaction is 2-(5Z,8Z,11Z,14Z-eicosatetraenoyl)-glycerol + H2O = glycerol + (5Z,8Z,11Z,14Z)-eicosatetraenoate + H(+). The enzyme catalyses prostaglandin D2-1-glycerol ester + H2O = prostaglandin D2 + glycerol + H(+). It carries out the reaction 2-glyceryl-15-deoxy-Delta(12,14)-prostaglandin J2 + H2O = 15-deoxy-Delta(12,14)-prostaglandin J2 + glycerol + H(+). It catalyses the reaction 1-(9Z,12Z-octadecadienoyl)-glycerol + H2O = (9Z,12Z)-octadecadienoate + glycerol + H(+). Its function is as follows. Phosphatidylserine (PS) lipase that mediates the hydrolysis of phosphatidylserine to generate lysophosphatidylserine (LPS). LPS constitutes a class of signaling lipids that regulates immunological and neurological processes. Has no activity towards diacylglycerol, triacylglycerol or lysophosphatidylserine lipase. Also has monoacylglycerol lipase activity, with preference for 1-(9Z,12Z-octadecadienoyl)-glycerol (1-LG) and 2-glyceryl-15-deoxy-Delta(12,14)-prostaglandin J2 (15d-PGJ(2)-G). This is Phosphatidylserine lipase ABHD16A from Macaca fascicularis (Crab-eating macaque).